The sequence spans 392 residues: Putative cystathionine gamma-lyase (392 aa).

A compositionally biased stretch (polar residues) spans 1 to 10; it reads MSDSATTDSA. Positions 1-41 are disordered; it reads MSDSATTDSAGTGGERSASAPGDGTRAVRAGLPEPVKHEPT. An N6-(pyridoxal phosphate)lysine modification is found at Lys216.

Belongs to the trans-sulfuration enzymes family. Pyridoxal 5'-phosphate is required as a cofactor.

Its subcellular location is the cytoplasm. The enzyme catalyses L,L-cystathionine + H2O = 2-oxobutanoate + L-cysteine + NH4(+). Its pathway is amino-acid biosynthesis; L-cysteine biosynthesis; L-cysteine from L-homocysteine and L-serine: step 2/2. This chain is Putative cystathionine gamma-lyase (cysA), found in Streptomyces coelicolor (strain ATCC BAA-471 / A3(2) / M145).